The primary structure comprises 139 residues: Transcription antitermination protein NusB (139 aa).

Belongs to the NusB family.

In terms of biological role, involved in transcription antitermination. Required for transcription of ribosomal RNA (rRNA) genes. Binds specifically to the boxA antiterminator sequence of the ribosomal RNA (rrn) operons. In Baumannia cicadellinicola subsp. Homalodisca coagulata, this protein is Transcription antitermination protein NusB.